We begin with the raw amino-acid sequence, 207 residues long: Urease accessory protein UreG (207 aa).

14–21 (GPVGSGKT) lines the GTP pocket.

It belongs to the SIMIBI class G3E GTPase family. UreG subfamily. Homodimer. UreD, UreF and UreG form a complex that acts as a GTP-hydrolysis-dependent molecular chaperone, activating the urease apoprotein by helping to assemble the nickel containing metallocenter of UreC. The UreE protein probably delivers the nickel.

The protein resides in the cytoplasm. In terms of biological role, facilitates the functional incorporation of the urease nickel metallocenter. This process requires GTP hydrolysis, probably effectuated by UreG. This is Urease accessory protein UreG from Pseudomonas entomophila (strain L48).